A 240-amino-acid polypeptide reads, in one-letter code: MTSTLKAEVDLHVHSLASGHAYSTINEIAAEAARRGLRGVAMTDHGPNMPAAPHPYHFECLYMIPDHLCGVRIFKGAETNIIGPGQVDLEDRLLEKMDLVLAGFHRHCGYGPSELQANTRAVLELMENPRIHIICHPGNPEYPLDYEAVARQAAATGTALELNNSSFVTSRVGSADNCRLIAKLCARFHSPVSLGSDAHIAQSVASFGHALDALNAAGIAPEQIVNRTLETTLDFLGMNT.

Zn(2+)-binding residues include His12, His14, His20, His45, Glu78, His105, His136, Asp197, and His199.

The protein belongs to the PHP family. Requires Zn(2+) as cofactor.

In Syntrophotalea carbinolica (strain DSM 2380 / NBRC 103641 / GraBd1) (Pelobacter carbinolicus), this protein is Probable phosphatase Pcar_2586.